The sequence spans 509 residues: Phosphoglycerate kinase, glycosomal (509 aa).

The (2R)-3-phosphoglycerate site is built by valine 32, aspartate 33, phenylalanine 34, asparagine 35, arginine 48, serine 70, histidine 71, glycine 73, arginine 74, arginine 224, histidine 260, and arginine 261. Glycine 306 contacts ADP. Position 306 (glycine 306) interacts with CDP. (2R)-3-phosphoglycerate is bound at residue lysine 308. AMP is bound at residue lysine 308. Aspartate 311 lines the CDP pocket. Mg(2+) is bound at residue aspartate 311. The ADP site is built by lysine 312 and glycine 330. Lysine 312 is an AMP binding site. Lysine 312 serves as a coordination point for ATP. Glycine 330 contacts CDP. AMP contacts are provided by alanine 331 and alanine 403. ATP is bound by residues alanine 331 and alanine 403. ADP contacts are provided by alanine 403 and asparagine 427. CDP is bound by residues glycine 428 and phenylalanine 433. 4 residues coordinate ADP: phenylalanine 433, glutamate 434, aspartate 466, and serine 467. Glutamate 434 contributes to the AMP binding site. Glutamate 434, aspartate 466, and serine 467 together coordinate ATP. A Mg(2+)-binding site is contributed by aspartate 466.

Belongs to the phosphoglycerate kinase family. In terms of assembly, monomer. It depends on Mg(2+) as a cofactor.

Its subcellular location is the glycosome. The enzyme catalyses (2R)-3-phosphoglycerate + ATP = (2R)-3-phospho-glyceroyl phosphate + ADP. It functions in the pathway carbohydrate degradation; glycolysis; pyruvate from D-glyceraldehyde 3-phosphate: step 2/5. This Trypanosoma congolense protein is Phosphoglycerate kinase, glycosomal (56PGK).